The following is a 110-amino-acid chain: Small nuclear ribonucleoprotein Sm D2 (110 aa).

The region spanning Met-31–Glu-110 is the Sm domain.

It belongs to the snRNP core protein family. Component of the Sm core complex, present in spliceosomal snRNP U1, U2, U4/U6 and U5. The core complex contains SMB1, SMD1, SMD2, SMD3, SME1, SMX3 and SMX2 (Sm proteins B, D1, D2, D3, E, F and G, respectively), and is probably a heptameric ring structure. Belongs to the CWC complex (or CEF1-associated complex), a spliceosome sub-complex reminiscent of a late-stage spliceosome composed of the U2, U5 and U6 snRNAs and at least BUD13, BUD31, BRR2, CDC40, CEF1, CLF1, CUS1, CWC2, CWC15, CWC21, CWC22, CWC23, CWC24, CWC25, CWC27, ECM2, HSH155, IST3, ISY1, LEA1, MSL1, NTC20, PRP8, PRP9, PRP11, PRP19, PRP21, PRP22, PRP45, PRP46, SLU7, SMB1, SMD1, SMD2, SMD3, SMX2, SMX3, SNT309, SNU114, SPP2, SYF1, SYF2, RSE1 and YJU2. Component of the U4/U6-U5 tri-snRNP complex composed of the U4, U6 and U5 snRNAs and at least PRP3, PRP4, PRP6, PRP8, PRP18, PRP31, PRP38, SNU13, SNU23, SNU66, SNU114, SPP381, SMB1, SMD1, SMD2, SMD3, SMX2, SMX3, LSM2, LSM3, LSM4, LSM5, LSM6, LSM7, LSM8, BRR2 and DIB1.

It localises to the nucleus. The protein localises to the cytoplasm. Its subcellular location is the cytosol. In terms of biological role, plays a role in pre-mRNA splicing as a core component of the spliceosomal U1, U2, U4 and U5 small nuclear ribonucleoproteins (snRNPs), the building blocks of the spliceosome. The polypeptide is Small nuclear ribonucleoprotein Sm D2 (SMD2) (Saccharomyces cerevisiae (strain ATCC 204508 / S288c) (Baker's yeast)).